A 258-amino-acid polypeptide reads, in one-letter code: Imidazole glycerol phosphate synthase subunit HisF (258 aa).

Active-site residues include aspartate 12 and aspartate 131.

The protein belongs to the HisA/HisF family. As to quaternary structure, heterodimer of HisH and HisF.

Its subcellular location is the cytoplasm. It catalyses the reaction 5-[(5-phospho-1-deoxy-D-ribulos-1-ylimino)methylamino]-1-(5-phospho-beta-D-ribosyl)imidazole-4-carboxamide + L-glutamine = D-erythro-1-(imidazol-4-yl)glycerol 3-phosphate + 5-amino-1-(5-phospho-beta-D-ribosyl)imidazole-4-carboxamide + L-glutamate + H(+). Its pathway is amino-acid biosynthesis; L-histidine biosynthesis; L-histidine from 5-phospho-alpha-D-ribose 1-diphosphate: step 5/9. Functionally, IGPS catalyzes the conversion of PRFAR and glutamine to IGP, AICAR and glutamate. The HisF subunit catalyzes the cyclization activity that produces IGP and AICAR from PRFAR using the ammonia provided by the HisH subunit. This is Imidazole glycerol phosphate synthase subunit HisF from Nitrosomonas europaea (strain ATCC 19718 / CIP 103999 / KCTC 2705 / NBRC 14298).